The chain runs to 365 residues: Glutamate 5-kinase 1 (365 aa).

K9 is a binding site for ATP. Substrate is bound by residues S49, D136, and N148. ATP is bound by residues 168–169 (TD) and 210–216 (TGGMKSK). One can recognise a PUA domain in the interval 276 to 353 (SGEIIIDAGA…DELDFEKTFE (78 aa)).

It belongs to the glutamate 5-kinase family.

It is found in the cytoplasm. The catalysed reaction is L-glutamate + ATP = L-glutamyl 5-phosphate + ADP. The protein operates within amino-acid biosynthesis; L-proline biosynthesis; L-glutamate 5-semialdehyde from L-glutamate: step 1/2. Its function is as follows. Catalyzes the transfer of a phosphate group to glutamate to form L-glutamate 5-phosphate. This Bacillus subtilis (strain 168) protein is Glutamate 5-kinase 1.